Here is a 351-residue protein sequence, read N- to C-terminus: Protein EXPRESSION OF TERPENOIDS 1 (351 aa).

Residues 1-23 (MANFFSLGGNQEQQHQEISSSQA) form a disordered region. The segment covering 11 to 22 (QEQQHQEISSSQ) has biased composition (low complexity). The Zn(2+) site is built by C129, C132, C140, C145, C149, and C156. Positions 129–156 (CQDCGNQAKKDCQHMRCRTCCKSRGFQC) form a DNA-binding region, zn(2)-C6 fungal-type; degenerate. Residues 170 to 219 (RRERQQQLAALQQQQQGHNNNNNNHKNKRQREDPSASSLVSTRLPSNTNG) form a disordered region. Residues 175–193 (QQLAALQQQQQGHNNNNNN) are compositionally biased toward low complexity. Polar residues predominate over residues 204–219 (SASSLVSTRLPSNTNG). The short motif at 258–261 (IGGH) is the Required for homo- and heterodimerization element. A disordered region spans residues 286–320 (TSSGGSAGGVQHHHHNSAAVATATTTSGGDATAAG). Over residues 303-320 (AAVATATTTSGGDATAAG) the composition is skewed to low complexity.

This sequence belongs to the SHI protein family. As to quaternary structure, forms homodimers and heterodimers with LRP1.

The protein resides in the nucleus. Its function is as follows. Transcription activator involved in the transcriptional regulation of terpene biosynthesis in glandular trichomes. Binds to the promoter of the linalool synthase TPS5 and promotes TPS5 gene transactivation. Acts synergistically with MYC1 in the transactivation of TPS5. This is Protein EXPRESSION OF TERPENOIDS 1 from Solanum lycopersicum (Tomato).